A 251-amino-acid polypeptide reads, in one-letter code: Ubiquinone/menaquinone biosynthesis C-methyltransferase UbiE (251 aa).

S-adenosyl-L-methionine-binding positions include threonine 74, aspartate 95, 123–124 (NA), and serine 140.

The protein belongs to the class I-like SAM-binding methyltransferase superfamily. MenG/UbiE family.

It carries out the reaction a 2-demethylmenaquinol + S-adenosyl-L-methionine = a menaquinol + S-adenosyl-L-homocysteine + H(+). The enzyme catalyses a 2-methoxy-6-(all-trans-polyprenyl)benzene-1,4-diol + S-adenosyl-L-methionine = a 5-methoxy-2-methyl-3-(all-trans-polyprenyl)benzene-1,4-diol + S-adenosyl-L-homocysteine + H(+). It participates in quinol/quinone metabolism; menaquinone biosynthesis; menaquinol from 1,4-dihydroxy-2-naphthoate: step 2/2. Its pathway is cofactor biosynthesis; ubiquinone biosynthesis. Functionally, methyltransferase required for the conversion of demethylmenaquinol (DMKH2) to menaquinol (MKH2) and the conversion of 2-polyprenyl-6-methoxy-1,4-benzoquinol (DDMQH2) to 2-polyprenyl-3-methyl-6-methoxy-1,4-benzoquinol (DMQH2). This chain is Ubiquinone/menaquinone biosynthesis C-methyltransferase UbiE, found in Pectobacterium atrosepticum (strain SCRI 1043 / ATCC BAA-672) (Erwinia carotovora subsp. atroseptica).